We begin with the raw amino-acid sequence, 259 residues long: GTP cyclohydrolase FolE2 (259 aa).

This sequence belongs to the GTP cyclohydrolase IV family.

It catalyses the reaction GTP + H2O = 7,8-dihydroneopterin 3'-triphosphate + formate + H(+). Its pathway is cofactor biosynthesis; 7,8-dihydroneopterin triphosphate biosynthesis; 7,8-dihydroneopterin triphosphate from GTP: step 1/1. Its function is as follows. Converts GTP to 7,8-dihydroneopterin triphosphate. This is GTP cyclohydrolase FolE2 from Nitratidesulfovibrio vulgaris (strain DSM 19637 / Miyazaki F) (Desulfovibrio vulgaris).